Consider the following 386-residue polypeptide: MSRSWISKRESKILYILLTTTELYLKTGHPVGSKTLKEYEGSNLSTATIRNYFSELEAEGFLKKNHISGGRIPTDLAFRYYVDHCADCSQDELPESTINLLNQLPEESQNIVKDLQKASELLGEALQLPTCFSSPRFDNDSVTNIQLSLVDEQRAVVILSTEFGQIFTDTLWLSEASNPASLKRIEIFLQSYVRKQSPMEILSQKEEDIGMTLYNEVVVRYLTRYCNFSEEDLYQTGLSKLLRYESFKDPDMLALGLSFFENRRHMCKLLDIGMHRDRPTAFIGNELSDIFRTPNPQCAVITIPYYMNRTPLGAFGVLGPVNLPYKEIFKTLTIFADKIKASLTQSFYKFKLSFRRPCPSDPTLSKEPTLLARYSSIKLLPPKETS.

Belongs to the HrcA family.

Its function is as follows. Negative regulator of class I heat shock genes (grpE-dnaK-dnaJ and groELS operons). Prevents heat-shock induction of these operons. The chain is Heat-inducible transcription repressor HrcA from Chlamydia caviae (strain ATCC VR-813 / DSM 19441 / 03DC25 / GPIC) (Chlamydophila caviae).